Here is a 473-residue protein sequence, read N- to C-terminus: Aspartyl/glutamyl-tRNA(Asn/Gln) amidotransferase subunit B (473 aa).

It belongs to the GatB/GatE family. GatB subfamily. As to quaternary structure, heterotrimer of A, B and C subunits.

The catalysed reaction is L-glutamyl-tRNA(Gln) + L-glutamine + ATP + H2O = L-glutaminyl-tRNA(Gln) + L-glutamate + ADP + phosphate + H(+). It catalyses the reaction L-aspartyl-tRNA(Asn) + L-glutamine + ATP + H2O = L-asparaginyl-tRNA(Asn) + L-glutamate + ADP + phosphate + 2 H(+). Its function is as follows. Allows the formation of correctly charged Asn-tRNA(Asn) or Gln-tRNA(Gln) through the transamidation of misacylated Asp-tRNA(Asn) or Glu-tRNA(Gln) in organisms which lack either or both of asparaginyl-tRNA or glutaminyl-tRNA synthetases. The reaction takes place in the presence of glutamine and ATP through an activated phospho-Asp-tRNA(Asn) or phospho-Glu-tRNA(Gln). In Francisella tularensis subsp. tularensis (strain FSC 198), this protein is Aspartyl/glutamyl-tRNA(Asn/Gln) amidotransferase subunit B.